The sequence spans 125 residues: Glycine cleavage system H protein (125 aa).

A Lipoyl-binding domain is found at 22 to 104; sequence SYIIGITDFA…YDTGWILKLT (83 aa). An N6-lipoyllysine modification is found at Lys63.

This sequence belongs to the GcvH family. The glycine cleavage system is composed of four proteins: P, T, L and H. The cofactor is (R)-lipoate.

In terms of biological role, the glycine cleavage system catalyzes the degradation of glycine. The H protein shuttles the methylamine group of glycine from the P protein to the T protein. Its function is as follows. Is also involved in protein lipoylation via its role as an octanoyl/lipoyl carrier protein intermediate. This Listeria welshimeri serovar 6b (strain ATCC 35897 / DSM 20650 / CCUG 15529 / CIP 8149 / NCTC 11857 / SLCC 5334 / V8) protein is Glycine cleavage system H protein.